A 566-amino-acid chain; its full sequence is Peroxisomal targeting signal receptor (566 aa).

C5 participates in a covalent cross-link: Glycyl cysteine thioester (Cys-Gly) (interchain with G-Cter in ubiquitin). The tract at residues 6–28 is amphipathic helix 1 (AH1); it reads SVGSNPLAQLNKHAQQNPALRQV. K17 is covalently cross-linked (Glycyl lysine isopeptide (Lys-Gly) (interchain with G-Cter in ubiquitin)). The amphipathic helix 2 (AH2) stretch occupies residues 53–71; the sequence is RFQMDQFMNRSPGFSDGQL. Residues 88–159 form a disordered region; the sequence is GLKKQDSGSS…IGRPMMHTGI (72 aa). The span at 94 to 142 shows a compositional bias: polar residues; that stretch reads SGSSNMSAGDTAQHSRSWGNEFNSRSPQQGLASRVNNVERISNTNSMSS. Residues 111-115 carry the WxxxF/Y motif 1 motif; it reads WGNEF. An amphipathic helix 3 (AH3) region spans residues 145-151; that stretch reads PGMSRIG. The short motif at 187-191 is the WxxxF/Y motif 2 element; the sequence is WNEQF. An amphipathic helix 4 (AH4) region spans residues 225–241; it reads FQEVWDKLQAETADNNL. The WxxxF/Y motif 3 signature appears at 248–252; the sequence is WEKDY. TPR repeat units follow at residues 277–311, 312–345, 416–449, 451–483, and 485–517; these read NPNA…DPAH, VDAW…DPTN, PEVQ…NPND, LMWN…KPSF, and RARY…HEVE.

Belongs to the peroxisomal targeting signal receptor family. In terms of assembly, interacts (via WxxxF/Y and LVxEF motifs) with PEX14; promoting translocation through the PEX13-PEX14 docking complex. Monoubiquitinated at Cys-5 by PEX2 during PEX5 passage through the retrotranslocation channel: monoubiquitination acts as a signal for PEX5 extraction and is required for proper export from peroxisomes and recycling. When PEX5 recycling is compromised, polyubiquitinated at Lys-17 by PEX10 during its passage through the retrotranslocation channel, leading to its degradation.

The protein localises to the cytoplasm. Its subcellular location is the cytosol. It is found in the peroxisome matrix. In terms of biological role, receptor that mediates peroxisomal import of proteins containing a C-terminal PTS1-type tripeptide peroxisomal targeting signal (SKL-type). Binds to cargo proteins containing a PTS1 peroxisomal targeting signal in the cytosol, and translocates them into the peroxisome matrix by passing through the PEX13-PEX14 docking complex along with cargo proteins. PEX5 receptor is then retrotranslocated into the cytosol, leading to release of bound cargo in the peroxisome matrix, and reset for a subsequent peroxisome import cycle. In Kluyveromyces lactis (strain ATCC 8585 / CBS 2359 / DSM 70799 / NBRC 1267 / NRRL Y-1140 / WM37) (Yeast), this protein is Peroxisomal targeting signal receptor (PEX5).